A 157-amino-acid polypeptide reads, in one-letter code: MASNKVVISALLVVVVSVLAATTTMADHHQEQVVYTPGQLCQPGIGYPTYPLPRCRAFVKRQCVAPGTVDEQVRRGCCRQLAAIDSSWCRCDALNHMLRIIYRESGAADAGHPMAEVFRGCRRGDIERAAASLPAFCNVDIPNGVGGVCYWLPGTGY.

A signal peptide spans 1–26 (MASNKVVISALLVVVVSVLAATTTMA). 5 cysteine pairs are disulfide-bonded: Cys41–Cys89, Cys55–Cys77, Cys63–Cys121, Cys78–Cys137, and Cys91–Cys149.

This sequence belongs to the cereal trypsin/alpha-amylase inhibitor family. Post-translationally, five disulfide bonds are present.

It is found in the secreted. In terms of biological role, seed storage protein. The chain is Alpha-amylase/trypsin inhibitor RA16 from Oryza sativa subsp. japonica (Rice).